Consider the following 530-residue polypeptide: Glucose-6-phosphate isomerase (530 aa).

Glu-356 (proton donor) is an active-site residue. Catalysis depends on residues His-387 and Lys-502.

Belongs to the GPI family.

The protein resides in the cytoplasm. It catalyses the reaction alpha-D-glucose 6-phosphate = beta-D-fructose 6-phosphate. The protein operates within carbohydrate biosynthesis; gluconeogenesis. Its pathway is carbohydrate degradation; glycolysis; D-glyceraldehyde 3-phosphate and glycerone phosphate from D-glucose: step 2/4. In terms of biological role, catalyzes the reversible isomerization of glucose-6-phosphate to fructose-6-phosphate. The polypeptide is Glucose-6-phosphate isomerase (Borrelia garinii subsp. bavariensis (strain ATCC BAA-2496 / DSM 23469 / PBi) (Borreliella bavariensis)).